Reading from the N-terminus, the 260-residue chain is Snake venom serine protease KN14 (260 aa).

The signal sequence occupies residues 1–18 (MVLIRVLANLLILQLSYA). Residues 19 to 24 (QKSSEL) constitute a propeptide that is removed on maturation. Residues 25-251 (VIGGDECNIN…HLDWIQSIIA (227 aa)) form the Peptidase S1 domain. 5 disulfide bridges follow: Cys31–Cys165, Cys100–Cys258, Cys144–Cys212, Cys176–Cys191, and Cys202–Cys227. The active-site Charge relay system is the His67. Asn105 is a glycosylation site (N-linked (GlcNAc...) asparagine). The active-site Charge relay system is the Asp112. Asn172 carries N-linked (GlcNAc...) asparagine glycosylation. Ser206 functions as the Charge relay system in the catalytic mechanism. N-linked (GlcNAc...) asparagine glycans are attached at residues Asn213 and Asn255.

The protein belongs to the peptidase S1 family. Snake venom subfamily. In terms of assembly, monomer. In terms of tissue distribution, expressed by the venom gland.

The protein localises to the secreted. Snake venom serine protease that may act in the hemostasis system of the prey. The protein is Snake venom serine protease KN14 of Trimeresurus stejnegeri (Chinese green tree viper).